The following is a 1368-amino-acid chain: Mediator of RNA polymerase II transcription subunit 23 (1368 aa).

The segment at Val-1343–Gln-1368 is disordered. The span at Ala-1347–Gln-1368 shows a compositional bias: polar residues.

This sequence belongs to the Mediator complex subunit 23 family. Interacts with ELK1. Component of the Mediator complex, which is composed of MED1, MED4, MED6, MED7, MED8, MED9, MED10, MED11, MED12, MED13, MED13L, MED14, MED15, MED16, MED17, MED18, MED19, MED20, MED21, MED22, MED23, MED24, MED25, MED26, MED27, MED29, MED30, MED31, CCNC, CDK8 and CDC2L6/CDK11. The MED12, MED13, CCNC and CDK8 subunits form a distinct module termed the CDK8 module. Mediator containing the CDK8 module is less active than Mediator lacking this module in supporting transcriptional activation. Individual preparations of the Mediator complex lacking one or more distinct subunits have been variously termed ARC, CRSP, DRIP, PC2, SMCC and TRAP. Interacts with CEBPB (when not methylated), CTNNB1, and GLI3. Interacts with the adenovirus E1A protein.

The protein resides in the nucleus. In terms of biological role, required for transcriptional activation subsequent to the assembly of the pre-initiation complex. Component of the Mediator complex, a coactivator involved in the regulated transcription of nearly all RNA polymerase II-dependent genes. Mediator functions as a bridge to convey information from gene-specific regulatory proteins to the basal RNA polymerase II transcription machinery. Mediator is recruited to promoters by direct interactions with regulatory proteins and serves as a scaffold for the assembly of a functional pre-initiation complex with RNA polymerase II and the general transcription factors. Required for transcriptional activation by adenovirus E1A protein. Required for ELK1-dependent transcriptional activation in response to activated Ras signaling. This is Mediator of RNA polymerase II transcription subunit 23 (MED23) from Homo sapiens (Human).